The sequence spans 587 residues: MTTVRVNGMKNGIIKKVSGPVVSAENMDGAAMYELVRVGNEQLVGEIIRLEGSVATIQVYEETSGLTIGDPVLCTGSPLSVELGPGLMGNIFDGIQRPLEKIAERSNSVFIPRGVNVPALDRKKVWEFRPADNLKVGDPITAGDIYGIVPETPLIDHKIMLPPNQMGKIVFLAPPGDYTLEDTVLEIDFNGQKKKFSMVHQWPVRLPRPVTEKLRADKPLLTGQRVLDALFPSVQGGTCAIPGAFGCGKTVISQALSKFSNSDGIVYVGCGERGNEMAEVLKDFPELTMTVGDREESIMKRTLLVANTSNMPVAAREASIYTGITVSEYYRDMGLNISMMADSTSRWAEALREISGRLAEMPADSGYPAYLAARLASFYERAGKVSCLGSPNRQGSITIVGAVSPPGGDFSDPVTSATLGIVQVFWGLDKKLAQRKHFPSVNWLISYSKYMKALEPYYEERFPEFLNYQQKAREILQTEDDLMEIVQLVGKDSLAENDKITLEVAKMIREDFLAQNSFTEYDRFCPFYKSVLMLRNMIHFYELANKAVEGSGEQHLTLAQIKEQMGETIYKISGMKFLDPAQGWSLF.

Gly-243–Thr-250 serves as a coordination point for ATP.

The protein belongs to the ATPase alpha/beta chains family. In terms of assembly, V-ATPase is a heteromultimeric enzyme composed of a peripheral catalytic V1 complex (main components: subunits A, B, C, D, E, and F) attached to an integral membrane V0 proton pore complex (main component: the proteolipid protein).

It carries out the reaction ATP + H2O + 4 H(+)(in) = ADP + phosphate + 5 H(+)(out). Its function is as follows. Catalytic subunit of the peripheral V1 complex of vacuolar ATPase. V-ATPase vacuolar ATPase is responsible for acidifying a variety of intracellular compartments in eukaryotic cells. The sequence is that of V-type proton ATPase catalytic subunit A from Cyanidium caldarium (Red alga).